The sequence spans 541 residues: Glucose-6-phosphate isomerase (541 aa).

Residue glutamate 346 is the Proton donor of the active site. Catalysis depends on residues histidine 377 and lysine 506.

The protein belongs to the GPI family.

The protein localises to the cytoplasm. The catalysed reaction is alpha-D-glucose 6-phosphate = beta-D-fructose 6-phosphate. The protein operates within carbohydrate biosynthesis; gluconeogenesis. It functions in the pathway carbohydrate degradation; glycolysis; D-glyceraldehyde 3-phosphate and glycerone phosphate from D-glucose: step 2/4. Functionally, catalyzes the reversible isomerization of glucose-6-phosphate to fructose-6-phosphate. The chain is Glucose-6-phosphate isomerase from Rhizobium leguminosarum bv. trifolii (strain WSM2304).